The primary structure comprises 764 residues: E3 ubiquitin-protein ligase CBL-B-B (764 aa).

Positions 1–19 are enriched in low complexity; that stretch reads MASSSSSSSNSSTSSSALS. The segment at 1–27 is disordered; the sequence is MASSSSSSSNSSTSSSALSGRLPGARS. The segment at 48–180 is 4H; sequence PPKQAAADRR…KAIFPSGQFQ (133 aa). The Cbl-PTB domain occupies 48–356; it reads PPKQAAADRR…GRSYNPDLTD (309 aa). The EF-hand-like stretch occupies residues 181–253; the sequence is GDTFRITKAD…FEFDIFARLF (73 aa). Ca(2+) contacts are provided by D234, T236, N238, Y240, and E245. The interval 254-356 is SH2-like; the sequence is QPWSSILRNW…GRSYNPDLTD (103 aa). R299 contacts 4-O-phospho-L-tyrosine. Positions 357–385 are linker; sequence LCEPTPHDHIKVTQEQYELYCEMGSTFQL. Residues 386–425 form an RING-type zinc finger; sequence CKICAENDKDVKIEPCGHLMCTSCLTSWQESDGQGCPFCR. 2 disordered regions span residues 482–583 and 707–726; these read MNER…SRTC and KVRN…SSHP. Residues 485-498 are compositionally biased toward polar residues; it reads RQNSPVTSPGSSPL. Residues 556–578 are compositionally biased toward pro residues; that stretch reads LPAPPPPLREPPPPPERPPPIPP.

As to quaternary structure, interacts with several SH3 domain-containing proteins and with poly-ubiquitinated proteins.

Its subcellular location is the cytoplasm. It carries out the reaction S-ubiquitinyl-[E2 ubiquitin-conjugating enzyme]-L-cysteine + [acceptor protein]-L-lysine = [E2 ubiquitin-conjugating enzyme]-L-cysteine + N(6)-ubiquitinyl-[acceptor protein]-L-lysine.. It participates in protein modification; protein ubiquitination. In terms of biological role, E3 ubiquitin-protein ligase which accepts ubiquitin from specific E2 ubiquitin-conjugating enzymes, and transfers it to substrates, generally promoting their degradation by the proteasome. This is E3 ubiquitin-protein ligase CBL-B-B (cblb-b) from Xenopus laevis (African clawed frog).